The following is a 128-amino-acid chain: Small ribosomal subunit protein bS6 (128 aa).

It belongs to the bacterial ribosomal protein bS6 family.

In terms of biological role, binds together with bS18 to 16S ribosomal RNA. In Thermotoga petrophila (strain ATCC BAA-488 / DSM 13995 / JCM 10881 / RKU-1), this protein is Small ribosomal subunit protein bS6.